Consider the following 543-residue polypeptide: EH domain-containing protein 2 (543 aa).

2 positions are modified to phosphoserine: serine 3 and serine 44. The Dynamin-type G domain maps to 55–286; it reads FDGKPMVLVA…DLFRDIQGLP (232 aa). The interval 65–72 is G1 motif; it reads GQYSTGKT. ATP is bound at residue 65 to 72; sequence GQYSTGKT. Residues 91-92 are G2 motif; sequence EP. The segment at 153-156 is G3 motif; the sequence is DTPG. The G4 motif stretch occupies residues 219-222; that stretch reads NKAD. Position 220 (lysine 220) interacts with ATP. Residue valine 243 is a region of interest, G5 motif. Tryptophan 258 contacts ATP. A mediates membrane-binding region spans residues 320–340; the sequence is TVFGKENKKKQLILKLPVIFA. A phosphoserine mark is found at serine 438, serine 468, serine 470, serine 484, and serine 493. The EH domain occupies 449 to 537; sequence DKSKYDEIFY…RRLVPPSKRR (89 aa). Positions 481 to 516 constitute an EF-hand domain; that stretch reads LPNSVLGRIWKLSDVDRDGMLDDEEFALASHLIEAK. Residues aspartate 494, aspartate 496, aspartate 498, methionine 500, and glutamate 505 each contribute to the Ca(2+) site. Residues 521–543 are disordered; the sequence is GLPTNLPRRLVPPSKRRQKGSAE. Over residues 534 to 543 the composition is skewed to basic residues; that stretch reads SKRRQKGSAE.

It belongs to the TRAFAC class dynamin-like GTPase superfamily. Dynamin/Fzo/YdjA family. EHD subfamily. Homodimer and homooligomer. Interacts with EHD1. May also interact with EHD3 and EHD4. Interacts with MYOF. Interacts with EHBP1. Interacts with FER1L5 (via second C2 domain). Interacts with CAV1 in a cholesterol-dependent manner. Interacts (via EH domain) with PACSIN2 (via NPF motifs); this interaction probably stabilizes the caveolae. As to expression, detected in lung and adipocytes. Detected at lower levels in heart and skeletal muscle.

The protein resides in the cell membrane. It is found in the membrane. It localises to the caveola. Its subcellular location is the endosome membrane. The protein localises to the cytoplasm. The protein resides in the cytosol. The very low intrinsic ATPase activity is increased upon interaction with liposomes. ATP- and membrane-binding protein that controls membrane reorganization/tubulation upon ATP hydrolysis. Plays a role in membrane trafficking between the plasma membrane and endosomes. Important for the internalization of GLUT4. Required for fusion of myoblasts to skeletal muscle myotubes. Required for normal translocation of FER1L5 to the plasma membrane. Regulates the equilibrium between cell surface-associated and cell surface-dissociated caveolae by constraining caveolae at the cell membrane. This chain is EH domain-containing protein 2, found in Mus musculus (Mouse).